The chain runs to 573 residues: Probable pectinesterase/pectinesterase inhibitor 41 (573 aa).

The first 22 residues, 1-22 (MLSLKLFLVTLFLSLQTLFIAS), serve as a signal peptide directing secretion. A pectinesterase inhibitor 41 region spans residues 25–184 (LLPSNSSSTI…TKLFSVSLAL (160 aa)). Asn29, Asn119, Asn173, Asn264, Asn268, Asn281, and Asn320 each carry an N-linked (GlcNAc...) asparagine glycan. The segment at 259–557 (VTVNQNGTGN…FTVENFLLGD (299 aa)) is pectinesterase 41. Thr336 lines the substrate pocket. N-linked (GlcNAc...) asparagine glycosylation is present at Asn353. Position 366 (Gln366) interacts with substrate. Catalysis depends on Asp389, which acts as the Proton donor; for pectinesterase activity. Cys403 and Cys423 are joined by a disulfide. Residue Asp410 is the Nucleophile; for pectinesterase activity of the active site. N-linked (GlcNAc...) asparagine glycosylation is found at Asn456 and Asn469. 2 residues coordinate substrate: Arg478 and Trp480. N-linked (GlcNAc...) asparagine glycosylation is found at Asn520, Asn541, and Asn547.

In the N-terminal section; belongs to the PMEI family. The protein in the C-terminal section; belongs to the pectinesterase family. In terms of tissue distribution, expressed in flowers, siliques, floral stems and rosettes leaves.

It is found in the secreted. The protein resides in the cell wall. It carries out the reaction [(1-&gt;4)-alpha-D-galacturonosyl methyl ester](n) + n H2O = [(1-&gt;4)-alpha-D-galacturonosyl](n) + n methanol + n H(+). Its pathway is glycan metabolism; pectin degradation; 2-dehydro-3-deoxy-D-gluconate from pectin: step 1/5. Acts in the modification of cell walls via demethylesterification of cell wall pectin. This chain is Probable pectinesterase/pectinesterase inhibitor 41 (PME41), found in Arabidopsis thaliana (Mouse-ear cress).